A 645-amino-acid polypeptide reads, in one-letter code: Sodium/potassium/calcium exchanger 3 (645 aa).

The N-terminal stretch at 1–43 is a signal peptide; sequence MPPPGDQDCARRRSRRRRRDLLLSQLCFLASVALLLWSLSSLR. At 44–106 the chain is on the extracellular side; that stretch reads EQKELDLMDL…DIFSNEDRRQ (63 aa). N-linked (GlcNAc...) asparagine glycans are attached at residues asparagine 70 and asparagine 85. A helical membrane pass occupies residues 107 to 127; it reads GAVVLHVLCAMYMFYALAIVC. The Cytoplasmic segment spans residues 128 to 151; the sequence is DDFFVPSLEKICERLHLSEDVAGA. Residues 148 to 188 form an Alpha-1 repeat; the sequence is VAGATFMAAGSSAPELFTSVIGVFITKGDVGVGTIVGSAVF. The helical transmembrane segment at 152-172 threads the bilayer; sequence TFMAAGSSAPELFTSVIGVFI. Residues 173-181 are Extracellular-facing; sequence TKGDVGVGT. Residues 182 to 202 traverse the membrane as a helical segment; sequence IVGSAVFNILCIIGVCGLFAG. The Cytoplasmic portion of the chain corresponds to 203-209; that stretch reads QVVALSS. A helical membrane pass occupies residues 210 to 230; sequence WCLLRDSIYYTLSVVALIVFI. Residues 231 to 234 are Extracellular-facing; it reads YDEK. A helical membrane pass occupies residues 235 to 255; the sequence is VSWWESLVLVLMYLIYIVIMK. The Cytoplasmic portion of the chain corresponds to 256–486; it reads YNACIHQCFE…WFMVTFASST (231 aa). At serine 307 the chain carries Phosphoserine. Disordered stretches follow at residues 379-398 and 404-442; these read TVENGTGPSSAPDRGVNGTR and AETDNETENENEDNENNENDEEEEEDEDDDEGPYTPFDP. Positions 404–435 are enriched in acidic residues; it reads AETDNETENENEDNENNENDEEEEEDEDDDEG. The helical transmembrane segment at 487-507 threads the bilayer; the sequence is LWIAAFSYMMVWMVTIIGYTL. Over 508-512 the chain is Extracellular; the sequence is GIPDV. Residues 513–533 form a helical membrane-spanning segment; that stretch reads IMGITFLAAGTSVPDCMASLI. An Alpha-2 repeat occupies 520–551; it reads AAGTSVPDCMASLIVARQGMGDMAVSNSIGSN. Topologically, residues 534-551 are cytoplasmic; the sequence is VARQGMGDMAVSNSIGSN. A helical membrane pass occupies residues 552-572; it reads VFDILIGLGLPWALQTLAVDY. Over 573–582 the chain is Extracellular; sequence GSYIRLNSRG. A helical transmembrane segment spans residues 583 to 603; the sequence is LIYSVGLLLASVFVTVFGVHL. Over 604–617 the chain is Cytoplasmic; it reads NKWQLDKKLGCGCL. A helical membrane pass occupies residues 618–638; that stretch reads FLYGVFLCFSIMTEFNVFTFV. The Extracellular segment spans residues 639–645; sequence NLPMCGD.

It belongs to the Ca(2+):cation antiporter (CaCA) (TC 2.A.19) family. SLC24A subfamily. In terms of tissue distribution, abundant in the brain. Highest levels found in selected thalamic nuclei, hippocampal CA1 neurons and in layer IV of the cerebral cortex. Expressed in dental tissues.

The protein resides in the cell membrane. It carries out the reaction Ca(2+)(out) + K(+)(out) + 4 Na(+)(in) = Ca(2+)(in) + K(+)(in) + 4 Na(+)(out). Its function is as follows. Calcium, potassium:sodium antiporter that transports 1 Ca(2+) and 1 K(+) in exchange for 4 Na(+). This Mus musculus (Mouse) protein is Sodium/potassium/calcium exchanger 3 (Slc24a3).